We begin with the raw amino-acid sequence, 477 residues long: Adenosylhomocysteinase (477 aa).

Substrate is bound by residues Thr-63, Asp-142, and Glu-202. An NAD(+)-binding site is contributed by 203-205 (TTT). Residues Lys-232 and Asp-236 each coordinate substrate. NAD(+)-binding positions include Asn-237, 266–271 (GYGDVG), Glu-289, Asn-324, 345–347 (IGH), and Asn-390.

Belongs to the adenosylhomocysteinase family. It depends on NAD(+) as a cofactor.

It localises to the cytoplasm. It catalyses the reaction S-adenosyl-L-homocysteine + H2O = L-homocysteine + adenosine. It functions in the pathway amino-acid biosynthesis; L-homocysteine biosynthesis; L-homocysteine from S-adenosyl-L-homocysteine: step 1/1. In terms of biological role, may play a key role in the regulation of the intracellular concentration of adenosylhomocysteine. The protein is Adenosylhomocysteinase of Leptothrix cholodnii (strain ATCC 51168 / LMG 8142 / SP-6) (Leptothrix discophora (strain SP-6)).